Here is a 386-residue protein sequence, read N- to C-terminus: Mannitol-1-phosphate 5-dehydrogenase (386 aa).

4 to 15 (AIHFGGGNIGRG) is a binding site for NAD(+). Residue Lys-211 is part of the active site.

The protein belongs to the mannitol dehydrogenase family. In terms of assembly, monomer.

The catalysed reaction is D-mannitol 1-phosphate + NAD(+) = beta-D-fructose 6-phosphate + NADH + H(+). Its function is as follows. Catalyzes the NAD(H)-dependent interconversion of D-fructose 6-phosphate and D-mannitol 1-phosphate in the mannitol metabolic pathway. In Emericella nidulans (strain FGSC A4 / ATCC 38163 / CBS 112.46 / NRRL 194 / M139) (Aspergillus nidulans), this protein is Mannitol-1-phosphate 5-dehydrogenase (mpdA).